The primary structure comprises 111 residues: ASFBZAPPGBSKAGEKIFKTKCAECHTVGRGAGHKQGPNLNGLFGRQSGTTAGYSYSAANKNMAVTWZZKTLYDYLLNPKKYIPGTKMVFPGLKKPZBRADLIAYLKESTA.

The residue at position 1 (alanine 1) is an N-acetylalanine. Heme c contacts are provided by cysteine 22, cysteine 25, and histidine 26. The residue at position 80 (lysine 80) is an N6,N6,N6-trimethyllysine. Heme c is bound at residue methionine 88. Lysine 94 bears the N6,N6,N6-trimethyllysine mark.

The protein belongs to the cytochrome c family. Binds 1 heme c group covalently per subunit.

Its subcellular location is the mitochondrion intermembrane space. Its function is as follows. Electron carrier protein. The oxidized form of the cytochrome c heme group can accept an electron from the heme group of the cytochrome c1 subunit of cytochrome reductase. Cytochrome c then transfers this electron to the cytochrome oxidase complex, the final protein carrier in the mitochondrial electron-transport chain. In Cannabis sativa (Hemp), this protein is Cytochrome c.